A 320-amino-acid chain; its full sequence is Protoheme IX farnesyltransferase (320 aa).

Residues 1 to 24 (MSMITERPVSDPAGQSVSATGDGA) are disordered. The next 8 helical transmembrane spans lie at 33 to 55 (AVVAAYVALTKPRIVELLLVTTV), 68 to 88 (LWLMAVVLVGGSLAAGAASVL), 117 to 137 (NALIFGLVLATVSVTLLAVFT), 140 to 160 (LAAGLTLAAILYYDLVYTAWL), 183 to 203 (WAAVTGSLAPAAWALFGVVFF), 241 to 261 (ILVFAWLTVLVSLVTWPLGAG), 262 to 282 (MGPIYGLPTLVVGVIFLVEAH), and 300 to 320 (FHWSTTYLTVVFAAVALDALI).

It belongs to the UbiA prenyltransferase family. Protoheme IX farnesyltransferase subfamily.

It localises to the cell membrane. The enzyme catalyses heme b + (2E,6E)-farnesyl diphosphate + H2O = Fe(II)-heme o + diphosphate. Its pathway is porphyrin-containing compound metabolism; heme O biosynthesis; heme O from protoheme: step 1/1. Converts heme B (protoheme IX) to heme O by substitution of the vinyl group on carbon 2 of heme B porphyrin ring with a hydroxyethyl farnesyl side group. In Salinispora tropica (strain ATCC BAA-916 / DSM 44818 / JCM 13857 / NBRC 105044 / CNB-440), this protein is Protoheme IX farnesyltransferase.